The following is a 689-amino-acid chain: Glycine--tRNA ligase beta subunit (689 aa).

Belongs to the class-II aminoacyl-tRNA synthetase family. Tetramer of two alpha and two beta subunits.

The protein resides in the cytoplasm. It carries out the reaction tRNA(Gly) + glycine + ATP = glycyl-tRNA(Gly) + AMP + diphosphate. This Cronobacter sakazakii (strain ATCC BAA-894) (Enterobacter sakazakii) protein is Glycine--tRNA ligase beta subunit.